The primary structure comprises 289 residues: Diaminopimelate epimerase (289 aa).

2 residues coordinate substrate: Asn-11 and Asn-78. Cys-87 acts as the Proton donor in catalysis. Substrate is bound by residues 88 to 89 (GN), Asn-163, Asn-199, and 217 to 218 (ER). Catalysis depends on Cys-226, which acts as the Proton acceptor. 227–228 (GT) contacts substrate.

It belongs to the diaminopimelate epimerase family. As to quaternary structure, homodimer.

It localises to the cytoplasm. It carries out the reaction (2S,6S)-2,6-diaminopimelate = meso-2,6-diaminopimelate. The protein operates within amino-acid biosynthesis; L-lysine biosynthesis via DAP pathway; DL-2,6-diaminopimelate from LL-2,6-diaminopimelate: step 1/1. In terms of biological role, catalyzes the stereoinversion of LL-2,6-diaminopimelate (L,L-DAP) to meso-diaminopimelate (meso-DAP), a precursor of L-lysine and an essential component of the bacterial peptidoglycan. This is Diaminopimelate epimerase from Mycolicibacterium gilvum (strain PYR-GCK) (Mycobacterium gilvum (strain PYR-GCK)).